We begin with the raw amino-acid sequence, 28 residues long: Conotoxin Cl9b (28 aa).

Pro17 and Pro28 each carry 4-hydroxyproline.

Contains 3 disulfide bonds. Expressed by the venom duct.

The protein localises to the secreted. The protein is Conotoxin Cl9b of Californiconus californicus (California cone).